Here is a 269-residue protein sequence, read N- to C-terminus: uncharacterized protein (269 aa).

A run of 5 helical transmembrane segments spans residues 65–85 (FSLFLTIVMIINLLFGSLFVM), 156–176 (VTSVLLAACRVCLNLMLISMV), 182–202 (YTRILLCIISYGMMIFVWLGF), 206–226 (MMSFMLATWLFAYNIVLNDFW), and 242–262 (TLSAIGGLLLLIHTGPGEFSF). The Di-lysine motif motif lies at 266-269 (KKKW).

This sequence belongs to the SURF4 family.

Its subcellular location is the membrane. This is an uncharacterized protein from Caenorhabditis elegans.